The sequence spans 148 residues: Lysozyme-like protein 1 (148 aa).

A signal peptide spans 1-19 (MKSVGVFALIISFSIVAES). Residues 20–148 (KIYTRCKLAK…SEWKRGCEVS (129 aa)) enclose the C-type lysozyme domain. 4 cysteine pairs are disulfide-bonded: C25/C145, C49/C133, C83/C98, and C94/C112. Residue E54 is part of the active site. N58 carries an N-linked (GlcNAc...) asparagine glycan. Residue D71 is part of the active site.

The protein belongs to the glycosyl hydrolase 22 family. In terms of assembly, monomer.

Its subcellular location is the secreted. It carries out the reaction Hydrolysis of (1-&gt;4)-beta-linkages between N-acetylmuramic acid and N-acetyl-D-glucosamine residues in a peptidoglycan and between N-acetyl-D-glucosamine residues in chitodextrins.. The chain is Lysozyme-like protein 1 (Lyzl1) from Mus musculus (Mouse).